The following is a 261-amino-acid chain: 3'-5' ssDNA/RNA exonuclease TatD (261 aa).

Residues Glu-92, His-128, and His-153 each contribute to the a divalent metal cation site.

The protein belongs to the metallo-dependent hydrolases superfamily. TatD-type hydrolase family. TatD subfamily. Monomer. Requires Mg(2+) as cofactor.

The protein localises to the cytoplasm. Its function is as follows. 3'-5' exonuclease that prefers single-stranded DNA and RNA. May play a role in the H(2)O(2)-induced DNA damage repair. In Erwinia billingiae (strain Eb661), this protein is 3'-5' ssDNA/RNA exonuclease TatD.